A 379-amino-acid chain; its full sequence is uncharacterized protein (379 aa).

Disordered stretches follow at residues 1-25 (MASD…EKGK), 128-158 (QGKT…IERT), and 355-379 (TEKT…QGDI). A compositionally biased stretch (polar residues) spans 128-141 (QGKTTSATTSNSTI).

This is an uncharacterized protein from Caenorhabditis elegans.